The following is a 591-amino-acid chain: CTP synthase 1-B (591 aa).

One can recognise a Glutamine amidotransferase type-1 domain in the interval 300 to 554 (SIALVGKYTK…LASVGRLSQY (255 aa)). Catalysis depends on for GATase activity residues cysteine 399, histidine 526, and glutamate 528. Positions 562–572 (SPRDTYSDRSE) are enriched in basic and acidic residues. The interval 562 to 581 (SPRDTYSDRSENSSPDAEIA) is disordered.

It belongs to the CTP synthase family.

The catalysed reaction is UTP + L-glutamine + ATP + H2O = CTP + L-glutamate + ADP + phosphate + 2 H(+). Its pathway is pyrimidine metabolism; CTP biosynthesis via de novo pathway; CTP from UDP: step 2/2. This enzyme is involved in the de novo synthesis of CTP, a precursor of DNA, RNA and phospholipids. Catalyzes the ATP-dependent amination of UTP to CTP with either L-glutamine or ammonia as a source of nitrogen. This Xenopus laevis (African clawed frog) protein is CTP synthase 1-B (ctps1-b).